The primary structure comprises 177 residues: Large ribosomal subunit protein uL10 (177 aa).

It belongs to the universal ribosomal protein uL10 family. Part of the ribosomal stalk of the 50S ribosomal subunit. The N-terminus interacts with L11 and the large rRNA to form the base of the stalk. The C-terminus forms an elongated spine to which L12 dimers bind in a sequential fashion forming a multimeric L10(L12)X complex.

Its function is as follows. Forms part of the ribosomal stalk, playing a central role in the interaction of the ribosome with GTP-bound translation factors. This chain is Large ribosomal subunit protein uL10, found in Thermoanaerobacter sp. (strain X514).